The sequence spans 432 residues: Glutamate-1-semialdehyde 2,1-aminomutase (432 aa).

At lysine 270 the chain carries N6-(pyridoxal phosphate)lysine.

It belongs to the class-III pyridoxal-phosphate-dependent aminotransferase family. HemL subfamily. In terms of assembly, homodimer. Requires pyridoxal 5'-phosphate as cofactor.

The protein resides in the cytoplasm. It catalyses the reaction (S)-4-amino-5-oxopentanoate = 5-aminolevulinate. It functions in the pathway porphyrin-containing compound metabolism; protoporphyrin-IX biosynthesis; 5-aminolevulinate from L-glutamyl-tRNA(Glu): step 2/2. This Acinetobacter baylyi (strain ATCC 33305 / BD413 / ADP1) protein is Glutamate-1-semialdehyde 2,1-aminomutase.